A 48-amino-acid polypeptide reads, in one-letter code: Photosystem II reaction center protein K (48 aa).

The propeptide occupies 1 to 11; it reads MFPSTNQEVLA. Residues 23-43 form a helical membrane-spanning segment; that stretch reads IVDVLPIIPLLFLLLAFVWQA.

Belongs to the PsbK family. As to quaternary structure, PSII is composed of 1 copy each of membrane proteins PsbA, PsbB, PsbC, PsbD, PsbE, PsbF, PsbH, PsbI, PsbJ, PsbK, PsbL, PsbM, PsbT, PsbY, PsbZ, Psb30/Ycf12, at least 3 peripheral proteins of the oxygen-evolving complex and a large number of cofactors. It forms dimeric complexes.

It is found in the plastid. The protein resides in the chloroplast thylakoid membrane. Its function is as follows. One of the components of the core complex of photosystem II (PSII). PSII is a light-driven water:plastoquinone oxidoreductase that uses light energy to abstract electrons from H(2)O, generating O(2) and a proton gradient subsequently used for ATP formation. It consists of a core antenna complex that captures photons, and an electron transfer chain that converts photonic excitation into a charge separation. In Euglena sanguinea, this protein is Photosystem II reaction center protein K.